We begin with the raw amino-acid sequence, 433 residues long: Glutamate-1-semialdehyde 2,1-aminomutase (433 aa).

At lysine 272 the chain carries N6-(pyridoxal phosphate)lysine.

Belongs to the class-III pyridoxal-phosphate-dependent aminotransferase family. HemL subfamily. Homodimer. The cofactor is pyridoxal 5'-phosphate.

It is found in the cytoplasm. The enzyme catalyses (S)-4-amino-5-oxopentanoate = 5-aminolevulinate. It participates in porphyrin-containing compound metabolism; protoporphyrin-IX biosynthesis; 5-aminolevulinate from L-glutamyl-tRNA(Glu): step 2/2. This is Glutamate-1-semialdehyde 2,1-aminomutase from Methylacidiphilum infernorum (isolate V4) (Methylokorus infernorum (strain V4)).